Consider the following 192-residue polypeptide: Adenylate kinase (192 aa).

10-15 (GAGKGT) contributes to the ATP binding site. Positions 30 to 59 (STGDMLREAIEKETEIGKQAKIFIESGALV) are NMP. Residues Thr31, Arg36, 57–59 (ALV), 85–88 (GYPR), and Gln92 each bind AMP. An LID region spans residues 126–142 (KRVEEVVAVGGKIRSDD). Arg127 provides a ligand contact to ATP. AMP-binding residues include Arg139 and Arg150. Ala178 contacts ATP.

Belongs to the adenylate kinase family. As to quaternary structure, monomer.

It is found in the cytoplasm. The catalysed reaction is AMP + ATP = 2 ADP. It functions in the pathway purine metabolism; AMP biosynthesis via salvage pathway; AMP from ADP: step 1/1. Its function is as follows. Catalyzes the reversible transfer of the terminal phosphate group between ATP and AMP. Plays an important role in cellular energy homeostasis and in adenine nucleotide metabolism. In Bartonella bacilliformis (strain ATCC 35685 / KC583 / Herrer 020/F12,63), this protein is Adenylate kinase.